Consider the following 103-residue polypeptide: Integration host factor subunit beta (103 aa).

Positions 62–81 (RNPKTGESVALPGKHVPHFK) are disordered.

It belongs to the bacterial histone-like protein family. Heterodimer of an alpha and a beta chain.

Functionally, this protein is one of the two subunits of integration host factor, a specific DNA-binding protein that functions in genetic recombination as well as in transcriptional and translational control. This is Integration host factor subunit beta from Xanthomonas axonopodis pv. citri (strain 306).